Consider the following 971-residue polypeptide: Reversion-inducing cysteine-rich protein with Kazal motifs (971 aa).

The first 22 residues, 1 to 22 (MASVRASPRSALLLLLAAAGVA), serve as a signal peptide directing secretion. One copy of the Knot 1 repeat lies at 37–84 (CCNHSKDNQMCRDVCEQIFSSKSESRLKHLLQRAPDYCPETMVEIWSC). Residues 37-338 (CCNHSKDNQM…NPVEVSMLTC (302 aa)) are 5 X Knot repeats. 2 N-linked (GlcNAc...) asparagine glycosylation sites follow: Asn-39 and Asn-86. 2 Knot repeats span residues 104–141 (CCEL…LFSC) and 151–197 (CCSY…LIHC). N-linked (GlcNAc...) asparagine glycosylation is present at Asn-200. Knot repeat units lie at residues 216-263 (CCDR…LWQC) and 292-338 (CCSK…MLTC). N-linked (GlcNAc...) asparagine glycans are attached at residues Asn-297 and Asn-352. Kazal-like domains follow at residues 627 to 673 (TFTG…PCIS), 698 to 752 (TFDK…PCQP), and 753 to 789 (FCRA…PCQA). 6 disulfides stabilise this stretch: Cys-633–Cys-658, Cys-635–Cys-654, Cys-643–Cys-671, Cys-716–Cys-735, Cys-724–Cys-750, and Cys-761–Cys-787. The 47-residue stretch at 704-750 (CSQYECVPRQLTCDQARDPVCDTDHMEHSNLCTLYQRGKSLSYRGPC) folds into the Kazal-like 2; degenerate domain. Ser-942 is lipidated: GPI-anchor amidated serine. The propeptide at 943–971 (SAVVGRPLFHSLLLLLSLGLTVHLLWTRP) is removed in mature form.

Belongs to the RECK family. Interacts (via knot repeats) with WNT7A (via disordered linker region); the interaction is direct. Interacts (via knot repeats) with WNT7B (via disordered linker region); the interaction is direct. Interacts with ADGRA2; the interaction is direct. Interacts with MMP9.

The protein resides in the cell membrane. Its function is as follows. Functions together with ADGRA2 to enable brain endothelial cells to selectively respond to Wnt7 signals (WNT7A or WNT7B). Plays a key role in Wnt7-specific responses: required for central nervous system (CNS) angiogenesis and blood-brain barrier regulation. Acts as a Wnt7-specific coactivator of canonical Wnt signaling by decoding Wnt ligands: acts by interacting specifically with the disordered linker region of Wnt7, thereby conferring ligand selectivity for Wnt7. ADGRA2 is then required to deliver RECK-bound Wnt7 to frizzled by assembling a higher-order RECK-ADGRA2-Fzd-LRP5-LRP6 complex. Also acts as a serine protease inhibitor: negatively regulates matrix metalloproteinase-9 (MMP9) by suppressing MMP9 secretion and by direct inhibition of its enzymatic activity. Also inhibits metalloproteinase activity of MMP2 and MMP14 (MT1-MMP). The chain is Reversion-inducing cysteine-rich protein with Kazal motifs from Mus musculus (Mouse).